We begin with the raw amino-acid sequence, 201 residues long: Elongation factor Ts (201 aa).

Residues 83 to 86 are involved in Mg(2+) ion dislocation from EF-Tu; the sequence is TDFV.

It belongs to the EF-Ts family.

It localises to the cytoplasm. Associates with the EF-Tu.GDP complex and induces the exchange of GDP to GTP. It remains bound to the aminoacyl-tRNA.EF-Tu.GTP complex up to the GTP hydrolysis stage on the ribosome. This is Elongation factor Ts from Methylacidiphilum infernorum (isolate V4) (Methylokorus infernorum (strain V4)).